The primary structure comprises 353 residues: Endophilin-A1 (353 aa).

The tract at residues 1–21 (MSVAGLKKQFHKATQKVSEKV) is membrane-binding amphipathic helix. Residues 1 to 27 (MSVAGLKKQFHKATQKVSEKVGGAEGT) form a disordered region. Positions 1–125 (MSVAGLKKQF…DVGEAMKELS (125 aa)) are binds and tubulates liposomes. The region spanning 18–249 (SEKVGGAEGT…LEDRIKEASS (232 aa)) is the BAR domain. The interval 60 to 87 (PNPASRAKLSMINTMSKIRGQEKGPGYP) is required for dimerization upon membrane association. Residues 181–201 (EELRQALEKFDESKEIAESSM) adopt a coiled-coil conformation. Residues 243-257 (RIKEASSQPKREYQP) show a composition bias toward basic and acidic residues. Positions 243–290 (RIKEASSQPKREYQPKPRMSLDFTSGGDNTQHNGGISHATTPKPAGAH) are disordered. Over residues 264-282 (DFTSGGDNTQHNGGISHAT) the composition is skewed to polar residues. Residues 291-350 (MDQPCCRALYDFEPENEGELGFKEGDIITLTNQIDENWYEGMLHGQSGFFPINYVDILVP) enclose the SH3 domain.

Belongs to the endophilin family. In terms of assembly, monomer; in cytoplasm. Homodimer; when associated with membranes. Associates with MAP4K3. This interaction appears to regulate MAP4K3-mediated JNK activation. Interacts with SYNJ1 and DNM1. In terms of tissue distribution, highly expressed in brain.

The protein resides in the cytoplasm. It localises to the membrane. Its subcellular location is the early endosome. It is found in the presynapse. Implicated in synaptic vesicle endocytosis. May recruit other proteins to membranes with high curvature. This Gallus gallus (Chicken) protein is Endophilin-A1.